Reading from the N-terminus, the 211-residue chain is Uracil phosphoribosyltransferase (211 aa).

Residues Arg-81, Arg-106, and 133–141 (DPMLATGNS) each bind 5-phospho-alpha-D-ribose 1-diphosphate. Uracil-binding positions include Ile-196 and 201–203 (GDA). Residue Asp-202 coordinates 5-phospho-alpha-D-ribose 1-diphosphate.

This sequence belongs to the UPRTase family. Requires Mg(2+) as cofactor.

It carries out the reaction UMP + diphosphate = 5-phospho-alpha-D-ribose 1-diphosphate + uracil. It participates in pyrimidine metabolism; UMP biosynthesis via salvage pathway; UMP from uracil: step 1/1. Allosterically activated by GTP. Its function is as follows. Catalyzes the conversion of uracil and 5-phospho-alpha-D-ribose 1-diphosphate (PRPP) to UMP and diphosphate. The protein is Uracil phosphoribosyltransferase of Myxococcus xanthus (strain DK1622).